We begin with the raw amino-acid sequence, 511 residues long: Coatomer subunit delta (511 aa).

Positions Gln-168–Gly-177 are enriched in basic and acidic residues. A disordered region spans residues Gln-168–Thr-196. Ser-223 carries the post-translational modification Phosphoserine. Lys-233 and Lys-241 each carry N6-acetyllysine. Ser-244 carries the phosphoserine modification. The 241-residue stretch at Met-271–Leu-511 folds into the MHD domain. 2 positions are modified to N6-acetyllysine: Lys-309 and Lys-351. Ser-493 is subject to Phosphoserine.

This sequence belongs to the adaptor complexes medium subunit family. Delta-COP subfamily. In terms of assembly, oligomeric complex that consists of at least the alpha, beta, beta', gamma, delta, epsilon and zeta subunits. Ubiquitously expressed.

Its subcellular location is the cytoplasm. The protein resides in the golgi apparatus membrane. The protein localises to the cytoplasmic vesicle. It is found in the COPI-coated vesicle membrane. Functionally, the coatomer is a cytosolic protein complex that binds to dilysine motifs and reversibly associates with Golgi non-clathrin-coated vesicles, which further mediate biosynthetic protein transport from the ER, via the Golgi up to the trans Golgi network. Coatomer complex is required for budding from Golgi membranes, and is essential for the retrograde Golgi-to-ER transport of dilysine-tagged proteins. In mammals, the coatomer can only be recruited by membranes associated to ADP-ribosylation factors (ARFs), which are small GTP-binding proteins; the complex also influences the Golgi structural integrity, as well as the processing, activity, and endocytic recycling of LDL receptors. The polypeptide is Coatomer subunit delta (ARCN1) (Bos taurus (Bovine)).